A 575-amino-acid chain; its full sequence is MSEMLKGIAASDGVAVAKAYLLVQPDLSFNKTSVEDTDAEATRLDDALAKSTEELQAIRDKAAQSLGEAEAQVFDAHLMVLSDPEMVGQIKQNIQDNKVNAEAALKEVTDMYIGMFEAMDDNAYMQERAADIRDVAKRILAHLLGVTLPNPSMINEEVIVVAHDLTPSDTAQLDRTYVKAFVTDIGGRTSHSAIMARSLEIPAIVGTKEITDKVKAGDILAVNGIIGDVIIDPTDAEKSEFEAEAKAYADQKAEWDKLKNAETVTADGKHVELAANIGTPKDLEGVHKNGGEAVGLYRTEFLYMDSSDFPTEEDQYQAYKAVLEGMEGKPVVVRTMDIGGDKELPYLTLPHEMNPFLGYRALRISLSELGDGMFRTQMRALLRASVHGNLRIMFPMVATLKEFRAAKAIFEDEKQKLVNEGVEVSNDIQVGIMIEIPAAAVLADKFAKEVDFFSVGTNDLIQYTMAADRMNERVSYLYQPYNPSILRLIKNVIDAAHAEGKWAGMCGEMAGDQTAVPLLLGMGLDEFSMSATSILKTRSLMKRLDTTKMAELADRALKECDTMEEVFALVEEYTK.

Residue histidine 191 is the Tele-phosphohistidine intermediate of the active site. The phosphoenolpyruvate site is built by arginine 298 and arginine 334. Glutamate 435 and aspartate 459 together coordinate Mg(2+). Phosphoenolpyruvate is bound by residues 458 to 459 and arginine 469; that span reads ND. Cysteine 506 serves as the catalytic Proton donor.

Belongs to the PEP-utilizing enzyme family. Homodimer. Mg(2+) serves as cofactor.

Its subcellular location is the cytoplasm. The catalysed reaction is L-histidyl-[protein] + phosphoenolpyruvate = N(pros)-phospho-L-histidyl-[protein] + pyruvate. Functionally, general (non sugar-specific) component of the phosphoenolpyruvate-dependent sugar phosphotransferase system (sugar PTS). This major carbohydrate active-transport system catalyzes the phosphorylation of incoming sugar substrates concomitantly with their translocation across the cell membrane. Enzyme I transfers the phosphoryl group from phosphoenolpyruvate (PEP) to the phosphoryl carrier protein (HPr). The protein is Phosphoenolpyruvate-protein phosphotransferase (ptsI) of Enterococcus faecalis (strain ATCC 700802 / V583).